Reading from the N-terminus, the 324-residue chain is Probable WRKY transcription factor 53 (324 aa).

The interval 93–126 is disordered; that stretch reads NPGSVPESPASINGSPRSEEFADGGGSSESHHRQ. The WRKY DNA-binding region spans 152–220; it reads GLEGPQDDVF…YRGTHTCSQA (69 aa).

The protein belongs to the WRKY group III family. Interacts with ESR/ESP and UPL5. Binds to WRKY30. In terms of processing, ubiquitinated by UPL5. Ubiquitination leads to its subsequent degradation, thus controlling the timing of leaf senescence.

It localises to the nucleus. Functionally, transcription factor. Interacts specifically with the W box (5'-(T)TGAC[CT]-3'), a frequently occurring elicitor-responsive cis-acting element. May regulate the early events of leaf senescence. Negatively regulates the expression of ESR/ESP. Together with WRKY46 and WRKY70, promotes resistance to P.syringae, probably by enhancing salicylic acid (SA)- dependent genes. Contributes to the suppression of jasmonic acid (MeJA)-induced expression of PDF1.2. This is Probable WRKY transcription factor 53 from Arabidopsis thaliana (Mouse-ear cress).